The primary structure comprises 298 residues: ADP-ribosylation factor GTPase-activating protein effector protein 2 (298 aa).

The residue at position 2 (serine 2) is an N-acetylserine. The Arf-GAP domain occupies 8-130; that stretch reads KKALSALLRD…KWIGDLSSIE (123 aa). A C4-type zinc finger spans residues 23–47; it reads CADCKAQLHPRWASWSLGVFICIKC. A disordered region spans residues 137–180; sequence EPVLHKPSANHSLPASNARLDQSSNSLQKTQTQPPSHLLSTSRS. Positions 145-171 are enriched in polar residues; it reads ANHSLPASNARLDQSSNSLQKTQTQPP. Phosphoserine is present on residues serine 180, serine 183, and serine 207.

The protein resides in the cytoplasm. The protein localises to the golgi apparatus. GTPase-activating protein for the ADP ribosylation factor family. The sequence is that of ADP-ribosylation factor GTPase-activating protein effector protein 2 (AGE2) from Saccharomyces cerevisiae (strain ATCC 204508 / S288c) (Baker's yeast).